The primary structure comprises 397 residues: Elongation factor Tu (397 aa).

Positions lysine 10–glutamate 207 constitute a tr-type G domain. The segment at glycine 19–threonine 26 is G1. A GTP-binding site is contributed by glycine 19–threonine 26. Residue threonine 26 participates in Mg(2+) binding. The tract at residues glycine 60–asparagine 64 is G2. The G3 stretch occupies residues aspartate 81–glycine 84. GTP contacts are provided by residues aspartate 81–histidine 85 and asparagine 136–aspartate 139. Residues asparagine 136–aspartate 139 form a G4 region. The G5 stretch occupies residues serine 174 to leucine 176.

The protein belongs to the TRAFAC class translation factor GTPase superfamily. Classic translation factor GTPase family. EF-Tu/EF-1A subfamily. As to quaternary structure, monomer.

It localises to the cytoplasm. It catalyses the reaction GTP + H2O = GDP + phosphate + H(+). Functionally, GTP hydrolase that promotes the GTP-dependent binding of aminoacyl-tRNA to the A-site of ribosomes during protein biosynthesis. This chain is Elongation factor Tu, found in Pseudomonas fluorescens (strain ATCC BAA-477 / NRRL B-23932 / Pf-5).